The sequence spans 214 residues: Mediator of RNA polymerase II transcription subunit 29 (214 aa).

Residues 1-78 (MMNQMGMHMQ…QQQSQQTEKV (78 aa)) form a disordered region. Over residues 15-34 (VPGGPGGPVGMAGGPVGGVG) the composition is skewed to gly residues. Residues 44–74 (QMQQQQQVAAQQQQQQQQQQQAQAHQQQSQQ) are compositionally biased toward low complexity.

This sequence belongs to the Mediator complex subunit 29 family. As to quaternary structure, component of the Mediator complex.

The protein localises to the nucleus. Component of the Mediator complex, a coactivator involved in the regulated transcription of nearly all RNA polymerase II-dependent genes. Mediator functions as a bridge to convey information from gene-specific regulatory proteins to the basal RNA polymerase II transcription machinery. Mediator is recruited to promoters by direct interactions with regulatory proteins and serves as a scaffold for the assembly of a functional preinitiation complex with RNA polymerase II and the general transcription factors. The polypeptide is Mediator of RNA polymerase II transcription subunit 29 (ix) (Aedes aegypti (Yellowfever mosquito)).